The sequence spans 262 residues: ABSCISIC ACID-INSENSITIVE 5-like protein 3 (262 aa).

Ser-21, Ser-43, and Ser-66 each carry phosphoserine. The residue at position 104 (Thr-104) is a Phosphothreonine. The region spanning 190 to 253 is the bZIP domain; sequence VERRQKRMIK…SEPPPDPKWK (64 aa). Residues 192–211 are basic motif; sequence RRQKRMIKNRESAARSRARK. Residues 218–232 are leucine-zipper; sequence LEIKVSRLEEENEKL. The span at 239–252 shows a compositional bias: basic and acidic residues; the sequence is EKILPSEPPPDPKW. Residues 239–262 are disordered; sequence EKILPSEPPPDPKWKLRRTNSASL.

Belongs to the bZIP family. ABI5 subfamily. DNA-binding heterodimer with ABI5/DPBF1, DPBF2 or AREB3/DPBF3. Interacts with the AFP proteins AFP2, AFP3 and AFP4. As to expression, predominantly expressed in seeds.

The protein localises to the nucleus. Functionally, binds to the embryo specification element and the ABA-responsive element (ABRE) of the Dc3 gene promoter and to the ABRE of the Em1 gene promoter. Could participate in abscisic acid-regulated gene expression during seed development. The sequence is that of ABSCISIC ACID-INSENSITIVE 5-like protein 3 (DPBF4) from Arabidopsis thaliana (Mouse-ear cress).